Consider the following 249-residue polypeptide: tRNA pseudouridine synthase A (249 aa).

Residue Asp52 is the Nucleophile of the active site. Residue Tyr111 coordinates substrate.

Belongs to the tRNA pseudouridine synthase TruA family. In terms of assembly, homodimer.

It catalyses the reaction uridine(38/39/40) in tRNA = pseudouridine(38/39/40) in tRNA. Functionally, formation of pseudouridine at positions 38, 39 and 40 in the anticodon stem and loop of transfer RNAs. The protein is tRNA pseudouridine synthase A of Maricaulis maris (strain MCS10) (Caulobacter maris).